A 127-amino-acid polypeptide reads, in one-letter code: Holotricin-2 (127 aa).

Residues 1 to 15 (MMKLVIALCLIGISA) form the signal peptide. The propeptide occupies 16 to 55 (AYVVPVYYEIYPEDATFDEADIEPQLSPAELHHGSIRERR). The disordered stretch occupies residues 43–84 (PAELHHGSIRERRSLQPGAPSFPMPGSQLPTSVSGNVEKQGR). Residues 45–56 (ELHHGSIRERRS) are compositionally biased toward basic and acidic residues. Residues 70-84 (QLPTSVSGNVEKQGR) are compositionally biased toward polar residues.

This sequence belongs to the coleoptericin family. As to expression, hemolymph.

It is found in the secreted. Its function is as follows. Antibacterial activity against Gram-negative bacteria but not against Gram-positive bacteria. This Holotrichia diomphalia (Korean black chafer) protein is Holotricin-2.